A 182-amino-acid polypeptide reads, in one-letter code: UPF0397 protein BCQ_2505 (182 aa).

The next 5 membrane-spanning stretches (helical) occupy residues 9-29, 40-60, 71-91, 114-134, and 142-162; these read VVAIGIGAALYGILGLWGFSI, AILTVFGALFGPVAGLLIGLI, WGIWWGWVISSGIIGFAMGFI, ITGLIGIVIAIIFAGAFDIIV, and IVIQVLGATIADVIVFLVLGL.

Belongs to the UPF0397 family.

It localises to the cell membrane. In Bacillus cereus (strain Q1), this protein is UPF0397 protein BCQ_2505.